A 387-amino-acid chain; its full sequence is Eukaryotic translation initiation factor 3 subunit M (387 aa).

The PCI domain occupies 181–340; the sequence is LSSKVMIELL…RKVHISSTMH (160 aa).

It belongs to the eIF-3 subunit M family. In terms of assembly, component of the eukaryotic translation initiation factor 3 (eIF-3) complex. The eIF-3 complex interacts with pix.

The protein localises to the cytoplasm. It is found in the golgi apparatus. In terms of biological role, component of the eukaryotic translation initiation factor 3 (eIF-3) complex, which is involved in protein synthesis of a specialized repertoire of mRNAs and, together with other initiation factors, stimulates binding of mRNA and methionyl-tRNAi to the 40S ribosome. The eIF-3 complex specifically targets and initiates translation of a subset of mRNAs involved in cell proliferation. In Drosophila mojavensis (Fruit fly), this protein is Eukaryotic translation initiation factor 3 subunit M.